The primary structure comprises 309 residues: MPASLQEVKRRIESTKKTSQITSAMQMVSTAKLSQIQKHATSYQVYATKIRSVITHLSKSHLLDSVNTTSKNSDGKVNTLGMLRQRPVKTTGIVVITSDRGLVGSYNSNVIKETLELIENNHHSTEDVAIIAIGGTGADFFKKRGYNVAYEYRGISDIPTYKDARPLVEAIVSMYDKEVYDELFVCYSHFVNTLTSEFRAEKMLPVSAENMGHDDLTSNDEGYSIEYETEPSEDAILEVVLPQYAESLVYGAILDAKTSEHASSSTAMKSASDNAKDIISSLELQYNRARQSAITTEITEITGAQAALE.

Belongs to the ATPase gamma chain family. F-type ATPases have 2 components, CF(1) - the catalytic core - and CF(0) - the membrane proton channel. CF(1) has five subunits: alpha(3), beta(3), gamma(1), delta(1), epsilon(1). CF(0) has three main subunits: a, b and c.

The protein localises to the cell membrane. Functionally, produces ATP from ADP in the presence of a proton gradient across the membrane. The gamma chain is believed to be important in regulating ATPase activity and the flow of protons through the CF(0) complex. This chain is ATP synthase gamma chain, found in Ligilactobacillus salivarius (strain UCC118) (Lactobacillus salivarius).